The sequence spans 385 residues: Methionine aminopeptidase 1 (385 aa).

The C6H2-type zinc-finger motif lies at 6 to 59 (SRVCETEGCSSEAKLQCPTCIKLGIQGSYFCSQECFKGSWASHKLLHKKAKDDK). Residues Cys-9, Cys-14, Cys-22, Cys-25, Cys-36, Cys-40, His-48, and His-52 each contribute to the Zn(2+) site. His-203 lines the a protein pocket. Zn(2+)-binding residues include Asp-220, Asp-231, and His-294. His-301 is a binding site for a protein. The Zn(2+) site is built by Glu-327 and Glu-358.

The protein belongs to the peptidase M24A family. Methionine aminopeptidase type 1 subfamily. In terms of assembly, associates with the 60S ribosomal subunit of the 80S translational complex. Requires Zn(2+) as cofactor. Co(2+) is required as a cofactor. It depends on Mn(2+) as a cofactor. Fe(2+) serves as cofactor.

It localises to the cytoplasm. The catalysed reaction is Release of N-terminal amino acids, preferentially methionine, from peptides and arylamides.. In terms of biological role, cotranslationally removes the N-terminal methionine from nascent proteins. The N-terminal methionine is often cleaved when the second residue in the primary sequence is small and uncharged (Met-Ala-, Cys, Gly, Pro, Ser, Thr, or Val). This is Methionine aminopeptidase 1 (metap1) from Xenopus tropicalis (Western clawed frog).